We begin with the raw amino-acid sequence, 337 residues long: Phenylalanine--tRNA ligase alpha subunit (337 aa).

Glutamate 258 contributes to the Mg(2+) binding site.

It belongs to the class-II aminoacyl-tRNA synthetase family. Phe-tRNA synthetase alpha subunit type 1 subfamily. In terms of assembly, tetramer of two alpha and two beta subunits. Mg(2+) is required as a cofactor.

The protein localises to the cytoplasm. The catalysed reaction is tRNA(Phe) + L-phenylalanine + ATP = L-phenylalanyl-tRNA(Phe) + AMP + diphosphate + H(+). In Paraburkholderia phytofirmans (strain DSM 17436 / LMG 22146 / PsJN) (Burkholderia phytofirmans), this protein is Phenylalanine--tRNA ligase alpha subunit.